Reading from the N-terminus, the 221-residue chain is Deoxyribose-phosphate aldolase (221 aa).

Asp91 functions as the Proton donor/acceptor in the catalytic mechanism. Lys153 functions as the Schiff-base intermediate with acetaldehyde in the catalytic mechanism. The active-site Proton donor/acceptor is Lys182.

The protein belongs to the DeoC/FbaB aldolase family. DeoC type 1 subfamily.

It localises to the cytoplasm. It catalyses the reaction 2-deoxy-D-ribose 5-phosphate = D-glyceraldehyde 3-phosphate + acetaldehyde. Its pathway is carbohydrate degradation; 2-deoxy-D-ribose 1-phosphate degradation; D-glyceraldehyde 3-phosphate and acetaldehyde from 2-deoxy-alpha-D-ribose 1-phosphate: step 2/2. In terms of biological role, catalyzes a reversible aldol reaction between acetaldehyde and D-glyceraldehyde 3-phosphate to generate 2-deoxy-D-ribose 5-phosphate. The sequence is that of Deoxyribose-phosphate aldolase from Clostridium botulinum (strain Eklund 17B / Type B).